Reading from the N-terminus, the 282-residue chain is Bis(5'-nucleosyl)-tetraphosphatase, symmetrical (282 aa).

This sequence belongs to the Ap4A hydrolase family.

The enzyme catalyses P(1),P(4)-bis(5'-adenosyl) tetraphosphate + H2O = 2 ADP + 2 H(+). Hydrolyzes diadenosine 5',5'''-P1,P4-tetraphosphate to yield ADP. The sequence is that of Bis(5'-nucleosyl)-tetraphosphatase, symmetrical from Paraburkholderia phymatum (strain DSM 17167 / CIP 108236 / LMG 21445 / STM815) (Burkholderia phymatum).